A 362-amino-acid polypeptide reads, in one-letter code: Phosphoserine aminotransferase (362 aa).

Residue Arg43 coordinates L-glutamate. Pyridoxal 5'-phosphate-binding positions include 77–78 (AR), Trp103, Thr153, Asp173, and Gln196. Residue Lys197 is modified to N6-(pyridoxal phosphate)lysine.

This sequence belongs to the class-V pyridoxal-phosphate-dependent aminotransferase family. SerC subfamily. Homodimer. Pyridoxal 5'-phosphate is required as a cofactor.

The protein resides in the cytoplasm. It carries out the reaction O-phospho-L-serine + 2-oxoglutarate = 3-phosphooxypyruvate + L-glutamate. The enzyme catalyses 4-(phosphooxy)-L-threonine + 2-oxoglutarate = (R)-3-hydroxy-2-oxo-4-phosphooxybutanoate + L-glutamate. The protein operates within amino-acid biosynthesis; L-serine biosynthesis; L-serine from 3-phospho-D-glycerate: step 2/3. It functions in the pathway cofactor biosynthesis; pyridoxine 5'-phosphate biosynthesis; pyridoxine 5'-phosphate from D-erythrose 4-phosphate: step 3/5. Functionally, catalyzes the reversible conversion of 3-phosphohydroxypyruvate to phosphoserine and of 3-hydroxy-2-oxo-4-phosphonooxybutanoate to phosphohydroxythreonine. This Legionella pneumophila (strain Paris) protein is Phosphoserine aminotransferase.